The chain runs to 487 residues: MSLMILGTSSHVGKSVTVAAICRIMIRQGISVAPFKSQNMSLNSYVTRDGAEIGIAQAMQAFAARVLPSALMNPVLLKPKGDSTSQVVLLGHPYKDVQIRDYYQETDHLLEIAVDAYHQLVEEYGAVIVEGAGGAAEVNLYDRDIANIRLAEHLRLPIVLVADIERGGVFAQVYGTIALLPEQIRPLVKGIIINKFRGDPTLFESGVKTLEDLTGVPVLGVIPYTRLDLPSEDSLSLQDKERQTGLVRIAVIRLPQIANFTDFELLERHAAVDYLLPGESLDGYDCIIIPGTKNTVNDLLALQASGTAAAIRDARGQGVPVIGICGGYQMLGKTVIDDGSEARKGTYEGLGLLDLVTTFEGYDKTTVQVQRTAAPVPPILDAMGTVSGYEIHMGTTVLKSGRTAFAGEGAVSDDGLVFGTYLHGLFMVPAAAEALLSYLYSQRGLTFTGIEEQNEDPYDLLADHFEAHLQMERLLTLCSDHTPETPV.

The GATase cobBQ-type domain maps to 246 to 431; that stretch reads LVRIAVIRLP…LHGLFMVPAA (186 aa). Cys325 acts as the Nucleophile in catalysis. The active site involves His423.

It belongs to the CobB/CobQ family. CobQ subfamily.

It functions in the pathway cofactor biosynthesis; adenosylcobalamin biosynthesis. Catalyzes amidations at positions B, D, E, and G on adenosylcobyrinic A,C-diamide. NH(2) groups are provided by glutamine, and one molecule of ATP is hydrogenolyzed for each amidation. The polypeptide is Probable cobyric acid synthase (Methanosphaerula palustris (strain ATCC BAA-1556 / DSM 19958 / E1-9c)).